The following is a 156-amino-acid chain: Transcription antitermination protein NusB (156 aa).

This sequence belongs to the NusB family.

In terms of biological role, involved in transcription antitermination. Required for transcription of ribosomal RNA (rRNA) genes. Binds specifically to the boxA antiterminator sequence of the ribosomal RNA (rrn) operons. In Mycolicibacterium paratuberculosis (strain ATCC BAA-968 / K-10) (Mycobacterium paratuberculosis), this protein is Transcription antitermination protein NusB.